An 83-amino-acid polypeptide reads, in one-letter code: Kappa-actitoxin-Aer3a (83 aa).

The N-terminal stretch at 1 to 22 (MKGQMIICLVLIALCMSVVVMA) is a signal peptide. The propeptide occupies 23-49 (QNLRAEELEKANPKDERVRSFERNQKR). The ShKT domain maps to 51 to 83 (CKDYLPKSECTQFRCRTSMKYKYTNCKKTCGTC). 3 cysteine pairs are disulfide-bonded: Cys51-Cys83, Cys60-Cys76, and Cys65-Cys80.

The protein belongs to the sea anemone type 1 potassium channel toxin family. Type 1a subfamily.

The protein resides in the secreted. Its subcellular location is the nematocyst. Its function is as follows. Specifically, dose-dependently and potently blocks the voltage-gated potassium channel Kv1.1/KCNA1 (Ki=1.6 pM). Moderately blocks potassium channel heterotetramers formed by 3 subunits of Kv1.1/KCNA1 and 1 subunit of Kv1.2/KCNA2 (Ki=56 nM) and weakly blocks those formed by 2 subunits of Kv1.1/KCNA1 and 2 subunits of Kv1.2/KCNA2 (Ki=14 nM). This Anemonia erythraea (Sea anemone) protein is Kappa-actitoxin-Aer3a.